The sequence spans 324 residues: DNA-directed RNA polymerase subunit alpha (324 aa).

Positions 1–228 are alpha N-terminal domain (alpha-NTD); that stretch reads MIEIQKPTIR…EHFNLFTDLS (228 aa). Residues 245–324 form an alpha C-terminal domain (alpha-CTD) region; the sequence is RNKLLDMTIE…STPKGEEEEK (80 aa).

This sequence belongs to the RNA polymerase alpha chain family. As to quaternary structure, homodimer. The RNAP catalytic core consists of 2 alpha, 1 beta, 1 beta' and 1 omega subunit. When a sigma factor is associated with the core the holoenzyme is formed, which can initiate transcription.

The enzyme catalyses RNA(n) + a ribonucleoside 5'-triphosphate = RNA(n+1) + diphosphate. Its function is as follows. DNA-dependent RNA polymerase catalyzes the transcription of DNA into RNA using the four ribonucleoside triphosphates as substrates. This chain is DNA-directed RNA polymerase subunit alpha, found in Caldicellulosiruptor saccharolyticus (strain ATCC 43494 / DSM 8903 / Tp8T 6331).